The sequence spans 259 residues: Ribosome maturation factor RimP (259 aa).

The segment covering 186-195 (RGKQAERELK) has biased composition (basic and acidic residues). A disordered region spans residues 186-259 (RGKQAERELK…RGDTDLSEGD (74 aa)). Basic residues predominate over residues 239 to 248 (KQHRLAAGRS).

It belongs to the RimP family.

The protein localises to the cytoplasm. Its function is as follows. Required for maturation of 30S ribosomal subunits. The polypeptide is Ribosome maturation factor RimP (Rhodopseudomonas palustris (strain HaA2)).